A 183-amino-acid polypeptide reads, in one-letter code: Neuroblastoma suppressor of tumorigenicity 1 (183 aa).

Residues 1 to 19 (MVMCVRAVLVCVLLELSRA) form the signal peptide. 5 disulfides stabilise this stretch: cysteine 38/cysteine 88, cysteine 52/cysteine 102, cysteine 62/cysteine 121, cysteine 66/cysteine 123, and cysteine 85/cysteine 126. The 90-residue stretch at 38–127 (CEAKNITQIV…ILHCSCQSCS (90 aa)) folds into the CTCK domain. Positions 145-170 (AQDLPSLPDATHTHPQHAHMQADQRD) are disordered.

It belongs to the DAN family.

The protein localises to the secreted. May act as a tumor suppressor. This Danio rerio (Zebrafish) protein is Neuroblastoma suppressor of tumorigenicity 1 (nbl1).